Reading from the N-terminus, the 213-residue chain is ATP synthase subunit delta 2 (213 aa).

This sequence belongs to the ATPase delta chain family. In terms of assembly, F-type ATPases have 2 components, F(1) - the catalytic core - and F(0) - the membrane proton channel. F(1) has five subunits: alpha(3), beta(3), gamma(1), delta(1), epsilon(1). F(0) has three main subunits: a(1), b(2) and c(10-14). The alpha and beta chains form an alternating ring which encloses part of the gamma chain. F(1) is attached to F(0) by a central stalk formed by the gamma and epsilon chains, while a peripheral stalk is formed by the delta and b chains.

It is found in the cell inner membrane. In terms of biological role, f(1)F(0) ATP synthase produces ATP from ADP in the presence of a proton or sodium gradient. F-type ATPases consist of two structural domains, F(1) containing the extramembraneous catalytic core and F(0) containing the membrane proton channel, linked together by a central stalk and a peripheral stalk. During catalysis, ATP synthesis in the catalytic domain of F(1) is coupled via a rotary mechanism of the central stalk subunits to proton translocation. Functionally, this protein is part of the stalk that links CF(0) to CF(1). It either transmits conformational changes from CF(0) to CF(1) or is implicated in proton conduction. In Brachyspira hyodysenteriae (strain ATCC 49526 / WA1), this protein is ATP synthase subunit delta 2.